The following is a 245-amino-acid chain: Biosynthetic peptidoglycan transglycosylase (245 aa).

The helical transmembrane segment at 13–35 (VGLARWIVYAGSVFAGAWLATQL) threads the bilayer.

Belongs to the glycosyltransferase 51 family.

The protein localises to the cell inner membrane. It carries out the reaction [GlcNAc-(1-&gt;4)-Mur2Ac(oyl-L-Ala-gamma-D-Glu-L-Lys-D-Ala-D-Ala)](n)-di-trans,octa-cis-undecaprenyl diphosphate + beta-D-GlcNAc-(1-&gt;4)-Mur2Ac(oyl-L-Ala-gamma-D-Glu-L-Lys-D-Ala-D-Ala)-di-trans,octa-cis-undecaprenyl diphosphate = [GlcNAc-(1-&gt;4)-Mur2Ac(oyl-L-Ala-gamma-D-Glu-L-Lys-D-Ala-D-Ala)](n+1)-di-trans,octa-cis-undecaprenyl diphosphate + di-trans,octa-cis-undecaprenyl diphosphate + H(+). Its pathway is cell wall biogenesis; peptidoglycan biosynthesis. Peptidoglycan polymerase that catalyzes glycan chain elongation from lipid-linked precursors. This is Biosynthetic peptidoglycan transglycosylase from Burkholderia vietnamiensis (strain G4 / LMG 22486) (Burkholderia cepacia (strain R1808)).